We begin with the raw amino-acid sequence, 96 residues long: Tenecin-3 (96 aa).

Residues 1 to 18 form the signal peptide; sequence MKTFVICLILVVAVSAAP. The disordered stretch occupies residues 19–96; the sequence is DHHDGHLGGH…HQGGYKTHGH (78 aa). 12 tandem repeats follow at residues 23–26, 31–34, 35–38, 39–42, 43–46, 47–50, 51–54, 59–62, 63–66, 67–70, 77–80, and 86–89. The tract at residues 23–89 is 12 X 4 AA repeats of G-X-X-G; it reads GHLGGHQTGH…GPGTGAGHQG (67 aa). A compositionally biased stretch (gly residues) spans 26 to 89; that stretch reads GGHQTGHQGG…GPGTGAGHQG (64 aa).

This sequence to H.diomphalia holotricin 3.

It localises to the secreted. In terms of biological role, antifungal heat stable protein produced in response to injury. It is active against C.albicans. No antibacterial activity against Gram-positive and Gram-negative bacteria. In Tenebrio molitor (Yellow mealworm beetle), this protein is Tenecin-3.